We begin with the raw amino-acid sequence, 502 residues long: Mitochondrial fusion and transport protein UGO1 (502 aa).

N-acetylmethionine is present on M1. Residues 1–293 (MNNNNVTEAT…VINSPDISKS (293 aa)) lie on the Cytoplasmic side of the membrane. Residues 1–294 (MNNNNVTEAT…INSPDISKSF (294 aa)) form a binds FZO1 region. One copy of the Solcar repeat lies at 288-383 (PDISKSFILA…NSFFNKLFDL (96 aa)). A helical; Signal-anchor for type II membrane protein membrane pass occupies residues 294–314 (FILALGAGVFTSIILLPVDLI). Residues 312-502 (DLIRTRLIVT…VDINMEQEKF (191 aa)) form a binds MGM1 region. Topologically, residues 315 to 502 (RTRLIVTSFK…VDINMEQEKF (188 aa)) are mitochondrial intermembrane.

As to quaternary structure, interacts with FZO1 through its cytoplasmic domain and with MGM1 through its mitochondrial intermembrane space domain.

The protein localises to the mitochondrion outer membrane. Its function is as follows. Required for mitochondrial fusion as well as normal mitochondrial morphology by bridging the essential interaction between FZO1 and MGM1. May coordinate fusion of inner and outer membranes during mitochondrial fusion. The protein is Mitochondrial fusion and transport protein UGO1 of Saccharomyces cerevisiae (strain ATCC 204508 / S288c) (Baker's yeast).